The sequence spans 436 residues: CaM kinase-like vesicle-associated protein (436 aa).

The Protein kinase domain maps to 24 to 286 (YDLGQIVKSE…AQEAINHEWI (263 aa)). Positions 328–436 (APENQTAAAT…ALDTVEEQSG (109 aa)) are disordered. The span at 333 to 409 (TAAATAPAAE…QPPAEPVVHV (77 aa)) shows a compositional bias: low complexity.

Belongs to the protein kinase superfamily. CAMK Ser/Thr protein kinase family. Interacts with calmodulin, in the presence of calcium. Ca(2+) serves as cofactor.

The protein resides in the cytoplasmic vesicle membrane. Its function is as follows. Does not appear to have detectable kinase activity. The protein is CaM kinase-like vesicle-associated protein (camkv) of Danio rerio (Zebrafish).